A 217-amino-acid chain; its full sequence is Large ribosomal subunit protein uL3 (217 aa).

A disordered region spans residues 127-162; it reads GFSRGPMSHGSKNHRAPGSTGAGTTPGRIYPGKRMA. Positions 142 to 153 are enriched in low complexity; the sequence is APGSTGAGTTPG.

It belongs to the universal ribosomal protein uL3 family. As to quaternary structure, part of the 50S ribosomal subunit. Forms a cluster with proteins L14 and L19.

In terms of biological role, one of the primary rRNA binding proteins, it binds directly near the 3'-end of the 23S rRNA, where it nucleates assembly of the 50S subunit. The protein is Large ribosomal subunit protein uL3 of Prochlorococcus marinus (strain AS9601).